The primary structure comprises 345 residues: Phosphoribosylformylglycinamidine cyclo-ligase (345 aa).

This sequence belongs to the AIR synthase family.

It is found in the cytoplasm. The enzyme catalyses 2-formamido-N(1)-(5-O-phospho-beta-D-ribosyl)acetamidine + ATP = 5-amino-1-(5-phospho-beta-D-ribosyl)imidazole + ADP + phosphate + H(+). The protein operates within purine metabolism; IMP biosynthesis via de novo pathway; 5-amino-1-(5-phospho-D-ribosyl)imidazole from N(2)-formyl-N(1)-(5-phospho-D-ribosyl)glycinamide: step 2/2. This Shewanella putrefaciens (strain CN-32 / ATCC BAA-453) protein is Phosphoribosylformylglycinamidine cyclo-ligase.